The following is a 978-amino-acid chain: Alanine--tRNA ligase, chloroplastic/mitochondrial (978 aa).

Residues histidine 655, histidine 659, cysteine 758, and histidine 762 each coordinate Zn(2+). A Glycyl lysine isopeptide (Lys-Gly) (interchain with G-Cter in ubiquitin) cross-link involves residue lysine 773.

It belongs to the class-II aminoacyl-tRNA synthetase family. Monomer. The cofactor is Zn(2+).

The protein localises to the plastid. Its subcellular location is the chloroplast. It is found in the mitochondrion. It catalyses the reaction tRNA(Ala) + L-alanine + ATP = L-alanyl-tRNA(Ala) + AMP + diphosphate. Catalyzes the attachment of alanine to tRNA(Ala) in a two-step reaction: alanine is first activated by ATP to form Ala-AMP and then transferred to the acceptor end of tRNA(Ala). Also edits incorrectly charged tRNA(Ala) via its editing domain. The protein is Alanine--tRNA ligase, chloroplastic/mitochondrial (EMB86) of Arabidopsis thaliana (Mouse-ear cress).